We begin with the raw amino-acid sequence, 133 residues long: Binder of sperm protein homolog 1 (133 aa).

Residues 1–20 (MAQPLDFLLVSICLFHSLFS) form the signal peptide. Fibronectin type-II domains lie at 40–84 (TEDG…YCAL) and 85–133 (SDYA…YCIE). 4 cysteine pairs are disulfide-bonded: C45-C69, C59-C82, C90-C116, and C104-C131. N-linked (GlcNAc...) asparagine glycosylation is present at N72.

It belongs to the seminal plasma protein family. As to expression, expressed only in the epididymis.

The protein resides in the secreted. Functionally, binds sperm in vitro and promotes sperm capacitation. Specifically promotes capacitation induced by high density lipoproteins (HDLs). Also binds heparin, phospholipid liposomes, and weakly to gelatin. Does not bind chondroitin sulfate B. In Mus musculus (Mouse), this protein is Binder of sperm protein homolog 1 (Bsph1).